The sequence spans 216 residues: Imidazole glycerol phosphate synthase subunit HisH (216 aa).

One can recognise a Glutamine amidotransferase type-1 domain in the interval 2–216 (RVAIIDYGSG…LISNFLRWKP (215 aa)). Catalysis depends on C88, which acts as the Nucleophile. Active-site residues include H196 and E198.

Heterodimer of HisH and HisF.

Its subcellular location is the cytoplasm. The enzyme catalyses 5-[(5-phospho-1-deoxy-D-ribulos-1-ylimino)methylamino]-1-(5-phospho-beta-D-ribosyl)imidazole-4-carboxamide + L-glutamine = D-erythro-1-(imidazol-4-yl)glycerol 3-phosphate + 5-amino-1-(5-phospho-beta-D-ribosyl)imidazole-4-carboxamide + L-glutamate + H(+). The catalysed reaction is L-glutamine + H2O = L-glutamate + NH4(+). The protein operates within amino-acid biosynthesis; L-histidine biosynthesis; L-histidine from 5-phospho-alpha-D-ribose 1-diphosphate: step 5/9. IGPS catalyzes the conversion of PRFAR and glutamine to IGP, AICAR and glutamate. The HisH subunit catalyzes the hydrolysis of glutamine to glutamate and ammonia as part of the synthesis of IGP and AICAR. The resulting ammonia molecule is channeled to the active site of HisF. In Agrobacterium fabrum (strain C58 / ATCC 33970) (Agrobacterium tumefaciens (strain C58)), this protein is Imidazole glycerol phosphate synthase subunit HisH.